Here is a 217-residue protein sequence, read N- to C-terminus: Probable GTP-binding protein EngB (217 aa).

Residues 27 to 201 (EGIEVAFAGR…REKLDTWFSE (175 aa)) form the EngB-type G domain. Residues 35 to 42 (GRSNAGKS), 62 to 66 (GRTQL), 80 to 83 (DLPG), 147 to 150 (TKAD), and 180 to 182 (FSS) contribute to the GTP site. S42 and T64 together coordinate Mg(2+).

Belongs to the TRAFAC class TrmE-Era-EngA-EngB-Septin-like GTPase superfamily. EngB GTPase family. The cofactor is Mg(2+).

Functionally, necessary for normal cell division and for the maintenance of normal septation. The sequence is that of Probable GTP-binding protein EngB from Yersinia enterocolitica serotype O:8 / biotype 1B (strain NCTC 13174 / 8081).